A 70-amino-acid polypeptide reads, in one-letter code: ATP synthase subunit epsilon, mitochondrial (70 aa).

Belongs to the eukaryotic ATPase epsilon family. F-type ATPases have 2 components, CF(1) - the catalytic core - and CF(0) - the membrane proton channel. CF(1) has five subunits: alpha(3), beta(3), gamma(1), delta(1), epsilon(1). CF(0) has three main subunits: a, b and c.

Its subcellular location is the mitochondrion. It localises to the mitochondrion inner membrane. Its function is as follows. Mitochondrial membrane ATP synthase (F(1)F(0) ATP synthase or Complex V) produces ATP from ADP in the presence of a proton gradient across the membrane which is generated by electron transport complexes of the respiratory chain. F-type ATPases consist of two structural domains, F(1) - containing the extramembraneous catalytic core, and F(0) - containing the membrane proton channel, linked together by a central stalk and a peripheral stalk. During catalysis, ATP synthesis in the catalytic domain of F(1) is coupled via a rotary mechanism of the central stalk subunits to proton translocation. Part of the complex F(1) domain and of the central stalk which is part of the complex rotary element. Rotation of the central stalk against the surrounding alpha(3)beta(3) subunits leads to hydrolysis of ATP in three separate catalytic sites on the beta subunits. This is ATP synthase subunit epsilon, mitochondrial from Ipomoea batatas (Sweet potato).